Reading from the N-terminus, the 196-residue chain is MKFLNQITNYAKEAVQSAKYIGQGLSVTFDHMRRRPITVQYPYEKLIPSERFRGRIHFEFDKCIACEVCVRVCPINLPVVDWVFNKELKKKELKHYSIDFGVCIFCANCVEYCPTNCLSVTEEYELATYDRHELNYDSVAMGRIPYKVTQDPMVTPIREFAYLPAGVMSGHDLPAGAQRAGERPEAIANTAKSSEN.

4Fe-4S ferredoxin-type domains follow at residues 54–83 (GRIH…VDWV) and 94–123 (KHYS…VTEE). Residues Cys-63, Cys-66, Cys-69, Cys-73, Cys-103, Cys-106, Cys-109, and Cys-113 each coordinate [4Fe-4S] cluster. Positions 174 to 196 (PAGAQRAGERPEAIANTAKSSEN) are disordered.

It belongs to the complex I 23 kDa subunit family. In terms of assembly, NDH-1 is composed of at least 11 different subunits. Requires [4Fe-4S] cluster as cofactor.

The protein localises to the cellular thylakoid membrane. It carries out the reaction a plastoquinone + NADH + (n+1) H(+)(in) = a plastoquinol + NAD(+) + n H(+)(out). The catalysed reaction is a plastoquinone + NADPH + (n+1) H(+)(in) = a plastoquinol + NADP(+) + n H(+)(out). Functionally, NDH-1 shuttles electrons from an unknown electron donor, via FMN and iron-sulfur (Fe-S) centers, to quinones in the respiratory and/or the photosynthetic chain. The immediate electron acceptor for the enzyme in this species is believed to be plastoquinone. Couples the redox reaction to proton translocation, and thus conserves the redox energy in a proton gradient. The sequence is that of NAD(P)H-quinone oxidoreductase subunit I from Thermosynechococcus vestitus (strain NIES-2133 / IAM M-273 / BP-1).